A 481-amino-acid chain; its full sequence is Replication factor C large subunit (481 aa).

43–50 (GKPGIGKT) contacts ATP. 2 stretches are compositionally biased toward basic and acidic residues: residues 408-433 (KVER…KDAD) and 441-457 (VPKE…ERPA). Residues 408–481 (KVEREKEPEP…HNQSTLFDGF (74 aa)) form a disordered region. The span at 471–481 (AHNQSTLFDGF) shows a compositional bias: polar residues.

Belongs to the activator 1 small subunits family. RfcL subfamily. Heteromultimer composed of small subunits (RfcS) and large subunits (RfcL).

Functionally, part of the RFC clamp loader complex which loads the PCNA sliding clamp onto DNA. The sequence is that of Replication factor C large subunit from Methanoregula boonei (strain DSM 21154 / JCM 14090 / 6A8).